We begin with the raw amino-acid sequence, 257 residues long: Peptide methionine sulfoxide reductase (257 aa).

Positions 61-88 are disordered; the sequence is LGFGSRPQPDPAASSAIAQGPDDDVPSP. Ser-244 carries the post-translational modification Phosphoserine.

This sequence belongs to the MsrA Met sulfoxide reductase family.

It catalyses the reaction L-methionyl-[protein] + [thioredoxin]-disulfide + H2O = L-methionyl-(S)-S-oxide-[protein] + [thioredoxin]-dithiol. It carries out the reaction [thioredoxin]-disulfide + L-methionine + H2O = L-methionine (S)-S-oxide + [thioredoxin]-dithiol. Has an important function as a repair enzyme for proteins that have been inactivated by oxidation. Catalyzes the reversible oxidation-reduction of methionine sulfoxide in proteins to methionine. The protein is Peptide methionine sulfoxide reductase (PMSR) of Brassica napus (Rape).